The chain runs to 478 residues: Serine/threonine-protein phosphatase 2A activator 1 (478 aa).

The tract at residues 359–478 is disordered; the sequence is DPSAIPPPSR…DITTKAPWAK (120 aa). Over residues 396-419 the composition is skewed to low complexity; the sequence is APWATASQSTPPPSTGTAAPWATS.

It belongs to the PTPA-type PPIase family.

The protein resides in the cytoplasm. It is found in the nucleus. It carries out the reaction [protein]-peptidylproline (omega=180) = [protein]-peptidylproline (omega=0). In terms of biological role, PPIases accelerate the folding of proteins. It catalyzes the cis-trans isomerization of proline imidic peptide bonds in oligopeptides. Acts as a regulatory subunit for PP2A-like phosphatases modulating their activity or substrate specificity, probably by inducing a conformational change in the catalytic subunit, a direct target of the PPIase. Can reactivate inactive phosphatase PP2A-phosphatase methylesterase complexes (PP2Ai) in presence of ATP and Mg(2+) by dissociating the inactive form from the complex. The chain is Serine/threonine-protein phosphatase 2A activator 1 (rrd1) from Aspergillus oryzae (strain ATCC 42149 / RIB 40) (Yellow koji mold).